Consider the following 280-residue polypeptide: Hydroxyethylthiazole kinase (280 aa).

Methionine 50 contributes to the substrate binding site. Residues lysine 125 and threonine 178 each contribute to the ATP site. Glycine 205 is a substrate binding site.

It belongs to the Thz kinase family. Requires Mg(2+) as cofactor.

The catalysed reaction is 5-(2-hydroxyethyl)-4-methylthiazole + ATP = 4-methyl-5-(2-phosphooxyethyl)-thiazole + ADP + H(+). It functions in the pathway cofactor biosynthesis; thiamine diphosphate biosynthesis; 4-methyl-5-(2-phosphoethyl)-thiazole from 5-(2-hydroxyethyl)-4-methylthiazole: step 1/1. Its function is as follows. Catalyzes the phosphorylation of the hydroxyl group of 4-methyl-5-beta-hydroxyethylthiazole (THZ). This chain is Hydroxyethylthiazole kinase, found in Lacticaseibacillus casei (strain BL23) (Lactobacillus casei).